A 406-amino-acid polypeptide reads, in one-letter code: Elongation factor Tu, chloroplastic (406 aa).

The tr-type G domain maps to 8–210 (KTHINIATIG…LLDSYIPKPK (203 aa)). GTP is bound by residues 17–24 (GHFNHGKT), 77–81 (DCPGH), and 132–135 (NKED). A Mg(2+)-binding site is contributed by T24.

It belongs to the TRAFAC class translation factor GTPase superfamily. Classic translation factor GTPase family. EF-Tu/EF-1A subfamily. Monomer.

The protein resides in the plastid. It is found in the chloroplast. The catalysed reaction is GTP + H2O = GDP + phosphate + H(+). GTP hydrolase that promotes the GTP-dependent binding of aminoacyl-tRNA to the A-site of ribosomes during protein biosynthesis. This Chaetosphaeridium globosum (Charophycean green alga) protein is Elongation factor Tu, chloroplastic (tufA).